Here is a 249-residue protein sequence, read N- to C-terminus: NH(3)-dependent NAD(+) synthetase (249 aa).

An ATP-binding site is contributed by G29 to S36. D35 is a Mg(2+) binding site. R116 contacts deamido-NAD(+). Residue T136 coordinates ATP. Mg(2+) is bound at residue E141. The deamido-NAD(+) site is built by K149 and D156. 2 residues coordinate ATP: K165 and S187. H233–K234 contributes to the deamido-NAD(+) binding site.

This sequence belongs to the NAD synthetase family. As to quaternary structure, homodimer.

It catalyses the reaction deamido-NAD(+) + NH4(+) + ATP = AMP + diphosphate + NAD(+) + H(+). It functions in the pathway cofactor biosynthesis; NAD(+) biosynthesis; NAD(+) from deamido-NAD(+) (ammonia route): step 1/1. Functionally, catalyzes the ATP-dependent amidation of deamido-NAD to form NAD. Uses ammonia as a nitrogen source. The protein is NH(3)-dependent NAD(+) synthetase of Syntrophomonas wolfei subsp. wolfei (strain DSM 2245B / Goettingen).